The primary structure comprises 549 residues: Small ribosomal subunit protein bS1 (549 aa).

S1 motif domains follow at residues 21–87, 105–171, 192–260, 277–347, 364–434, and 451–512; these read GSIV…LSRE, KATV…VSRR, GSEV…LGLK, NSKL…LGLK, GDKV…LGIK, and GAVV…LSVK.

Belongs to the bacterial ribosomal protein bS1 family.

Its function is as follows. Binds mRNA; thus facilitating recognition of the initiation point. It is needed to translate mRNA with a short Shine-Dalgarno (SD) purine-rich sequence. In Haemophilus influenzae (strain ATCC 51907 / DSM 11121 / KW20 / Rd), this protein is Small ribosomal subunit protein bS1 (rpsA).